Consider the following 614-residue polypeptide: Probable NOT transcription complex subunit VIP2 (614 aa).

Disordered regions lie at residues 1–46 (MSNL…NLQG), 58–89 (NMQG…SSGR), and 361–391 (NLGA…GLRP). The span at 364–381 (ATYSSHRPQQQPQHTSST) shows a compositional bias: polar residues.

Belongs to the CNOT2/3/5 family. Interacts with Agrobacterium tumefaciens VirE2. Binds to VIP1. Forms a complex made of Agrobacterium VirE2, VIP1, VIP2 and single-stranded DNA (ssDNA).

The protein localises to the nucleus. In terms of biological role, transcriptional regulator required for Agrobacterium-mediated stable genetic transformation by T-DNA integration in host genome, but not for T-DNA transient expression. This chain is Probable NOT transcription complex subunit VIP2 (VIP2), found in Arabidopsis thaliana (Mouse-ear cress).